A 293-amino-acid polypeptide reads, in one-letter code: Triplex capsid protein 2 (293 aa).

The protein belongs to the herpesviridae TRX2 protein family. Interacts with TRX1 and major capisd protein/MCP.

The protein resides in the virion. It localises to the host nucleus. Its function is as follows. Structural component of the T=16 icosahedral capsid. The capsid is composed of pentamers and hexamers of major capsid protein/MCP, which are linked together by heterotrimers called triplexes. These triplexes are formed by a single molecule of triplex protein 1/TRX1 and two copies of triplex protein 2/TRX2. Additionally, TRX1 is required for efficient transport of TRX2 to the nucleus, which is the site of capsid assembly. The chain is Triplex capsid protein 2 from Homo sapiens (Human).